The sequence spans 340 residues: GTPase Obg (340 aa).

The Obg domain maps to 1–158 (MSFIDEAKVY…KWIILKLKII (158 aa)). Residues 159 to 325 (SDVGIIGLPN…LSILIKHINK (167 aa)) enclose the OBG-type G domain. GTP is bound by residues 165–172 (GLPNAGKS), 190–194 (FTTLE), 211–214 (DIPG), 278–281 (NKCD), and 306–308 (SSI). S172 and T192 together coordinate Mg(2+).

This sequence belongs to the TRAFAC class OBG-HflX-like GTPase superfamily. OBG GTPase family. As to quaternary structure, monomer. Requires Mg(2+) as cofactor.

The protein resides in the cytoplasm. Functionally, an essential GTPase which binds GTP, GDP and possibly (p)ppGpp with moderate affinity, with high nucleotide exchange rates and a fairly low GTP hydrolysis rate. Plays a role in control of the cell cycle, stress response, ribosome biogenesis and in those bacteria that undergo differentiation, in morphogenesis control. The polypeptide is GTPase Obg (Ehrlichia ruminantium (strain Gardel)).